The following is a 289-amino-acid chain: Phospholipase A1 (289 aa).

The signal sequence occupies residues 1-20 (MRTGPGWLLAAAALPFFACA). Residues 21-52 (QEATIDKVHDTPAVRGSIIANMLQEHDNPFTL) lie on the Periplasmic side of the membrane. The chain crosses the membrane as a beta stranded span at residues 53–65 (YPYESNYLLYTYT). Topologically, residues 66–84 (SDLNKKAIESYNWSDNANK) are extracellular. The beta stranded transmembrane segment at 85–99 (DEVKFQLSLAFPLWR) threads the bilayer. The Periplasmic portion of the chain corresponds to 100 to 105 (GILGDN). The chain crosses the membrane as a beta stranded span at residues 106 to 118 (SLLGASYTQRSWW). At 119–128 (QLSNTGESAP) the chain is on the extracellular side. Residue Ser126 coordinates Ca(2+). A beta stranded transmembrane segment spans residues 129–148 (FRETNYEPQLFLGFATDYSV). The Periplasmic segment spans residues 149–150 (GD). A beta stranded membrane pass occupies residues 151 to 164 (WTLRDAEFGYNHQS). The Proton acceptor role is filled by His162. Ser164 acts as the Nucleophile in catalysis. Residues 165–173 (NGRSDPTSR) lie on the Extracellular side of the membrane. The Ca(2+) site is built by Arg167 and Ser172. The beta stranded transmembrane segment at 174-186 (SWNRLYSRLMAQN) threads the bilayer. Topologically, residues 187 to 188 (GN) are periplasmic. A beta stranded transmembrane segment spans residues 189 to 198 (WLVEVKPWYV). Over 199-216 (IGDTSDNKNITKYMGYYQ) the chain is Extracellular. Residue Asp204 coordinates Ca(2+). A beta stranded membrane pass occupies residues 217–223 (LKIGYQL). The Periplasmic segment spans residues 224–225 (GE). Residues 226–234 (AVLSAKGQY) traverse the membrane as a beta stranded segment. At 235–241 (NWNTGYG) the chain is on the extracellular side. A beta stranded membrane pass occupies residues 242–250 (GAELGVSYP). Topologically, residues 251–255 (ITKHV) are periplasmic. The chain crosses the membrane as a beta stranded span at residues 256–265 (RFYTQVYSGY). At 266–274 (GESLIDYDF) the chain is on the extracellular side. A beta stranded membrane pass occupies residues 275-286 (NQTRVGMGVMLN). Topologically, residues 287-289 (DLF) are periplasmic.

This sequence belongs to the phospholipase A1 family. Homodimer; dimerization is reversible, and the dimeric form is the active one. It depends on Ca(2+) as a cofactor.

The protein localises to the cell outer membrane. It carries out the reaction a 1,2-diacyl-sn-glycero-3-phosphocholine + H2O = a 2-acyl-sn-glycero-3-phosphocholine + a fatty acid + H(+). The enzyme catalyses a 1,2-diacyl-sn-glycero-3-phosphocholine + H2O = a 1-acyl-sn-glycero-3-phosphocholine + a fatty acid + H(+). Its function is as follows. Hydrolysis of phosphatidylcholine with phospholipase A2 (EC 3.1.1.4) and phospholipase A1 (EC 3.1.1.32) activities. The protein is Phospholipase A1 (pldA) of Proteus vulgaris.